Consider the following 67-residue polypeptide: Small ribosomal subunit protein bS21 (67 aa).

This sequence belongs to the bacterial ribosomal protein bS21 family.

This Nitratidesulfovibrio vulgaris (strain DSM 19637 / Miyazaki F) (Desulfovibrio vulgaris) protein is Small ribosomal subunit protein bS21.